Here is a 218-residue protein sequence, read N- to C-terminus: NAD(P)H-quinone oxidoreductase subunit I (218 aa).

4Fe-4S ferredoxin-type domains are found at residues Gly55–Val84 and Arg95–Glu124. The [4Fe-4S] cluster site is built by Cys64, Cys67, Cys70, Cys74, Cys104, Cys107, Cys110, and Cys114. The tract at residues Met169–Gly218 is disordered. Polar residues predominate over residues Gln208–Gly218.

It belongs to the complex I 23 kDa subunit family. In terms of assembly, NDH-1 is composed of at least 11 different subunits. The cofactor is [4Fe-4S] cluster.

The protein resides in the cellular thylakoid membrane. The catalysed reaction is a plastoquinone + NADH + (n+1) H(+)(in) = a plastoquinol + NAD(+) + n H(+)(out). It carries out the reaction a plastoquinone + NADPH + (n+1) H(+)(in) = a plastoquinol + NADP(+) + n H(+)(out). NDH-1 shuttles electrons from an unknown electron donor, via FMN and iron-sulfur (Fe-S) centers, to quinones in the respiratory and/or the photosynthetic chain. The immediate electron acceptor for the enzyme in this species is believed to be plastoquinone. Couples the redox reaction to proton translocation, and thus conserves the redox energy in a proton gradient. This chain is NAD(P)H-quinone oxidoreductase subunit I, found in Prochlorococcus marinus (strain MIT 9313).